Consider the following 173-residue polypeptide: uncharacterized protein (173 aa).

This is an uncharacterized protein from Mycobacterium tuberculosis (strain CDC 1551 / Oshkosh).